Consider the following 411-residue polypeptide: Peptidase T (411 aa).

His78 lines the Zn(2+) pocket. Asp80 is a catalytic residue. Asp140 lines the Zn(2+) pocket. The active-site Proton acceptor is Glu173. Positions 174, 196, and 379 each coordinate Zn(2+).

This sequence belongs to the peptidase M20B family. It depends on Zn(2+) as a cofactor.

It localises to the cytoplasm. It catalyses the reaction Release of the N-terminal residue from a tripeptide.. Functionally, cleaves the N-terminal amino acid of tripeptides. This chain is Peptidase T, found in Yersinia pseudotuberculosis serotype O:1b (strain IP 31758).